The sequence spans 85 residues: Large ribosomal subunit protein bL27 (85 aa).

The disordered stretch occupies residues 1-27 (MAHKKAGGSTKNGRDSQSKRLGVKRYG).

It belongs to the bacterial ribosomal protein bL27 family.

The polypeptide is Large ribosomal subunit protein bL27 (Halorhodospira halophila (strain DSM 244 / SL1) (Ectothiorhodospira halophila (strain DSM 244 / SL1))).